The chain runs to 505 residues: MQRIIGTEVEYGISSPSDPTANPILTSTQAVLAYAAAAGIQRAKRTRWDYEVESPLRDARGFDLSRSAGPPPVVDADEVGAANMILTNGARLYVDHAHPEYSAPECTDPLDAVIWDKAGERVMEAAARHVASVPGAAKLQLYKNNVDGKGASYGSHENYLMSRQTPFSAIITGLTPFLVSRQVVTGSGRVGIGPSGDEPGFQLSQRSDYIEVEVGLETTLKRGIINTRDEPHADADRYRRLHVIIGDANLAETSTYLKLGTTALVLDLIEEGPAHAIDLTDLALARPVHAVHAISRDPSLRATVALADGRELTGLALQRIYLDRVAKLVDSRDPDPRAADIVETWAHVLDQLERDPMDCAELLDWPAKLRLLDGFRQRENLSWSAPRLHLVDLQYSDVRLDKGLYNRLVARGSMKRLVTEHQVLSAVENPPTDTRAYFRGECLRRFGADIAAASWDSVIFDLGGDSLVRIPTLEPLRGSKAHVGALLDSVDSAVELVEQLTAEPR.

Residue 6–10 (GTEVE) coordinates ATP. The Mg(2+) site is built by Glu-8 and Tyr-93. The active-site Proton acceptor is Asp-95. Glu-100 provides a ligand contact to Mg(2+). 102 to 103 (SA) is a binding site for ATP. Position 156 (His-156) interacts with Mg(2+). Positions 158 and 240 each coordinate ATP. His-242 contributes to the Mg(2+) binding site.

It belongs to the Pup ligase/Pup deamidase family. Pup deamidase subfamily. In terms of assembly, interacts with the prokaryotic ubiquitin-like protein Pup. Requires ATP as cofactor.

It catalyses the reaction [prokaryotic ubiquitin-like protein]-C-terminal-L-glutamine + H2O = [prokaryotic ubiquitin-like protein]-C-terminal-L-glutamate + NH4(+). It functions in the pathway protein degradation; proteasomal Pup-dependent pathway. Its function is as follows. Specifically catalyzes the deamidation of the C-terminal glutamine of the prokaryotic ubiquitin-like protein Pup to glutamate, thereby rendering Pup competent for conjugation. Also displays depupylase (DPUP) activity, removing conjugated Pup from target proteins; is thus involved in the recycling of Pup and may function similarly to deubiquitinases (DUBs) in eukaryotes to prevent or promote proteasomal degradation of certain proteins. In Mycobacterium tuberculosis (strain CDC 1551 / Oshkosh), this protein is Pup deamidase/depupylase (dop).